We begin with the raw amino-acid sequence, 103 residues long: Large ribosomal subunit protein bL21 (103 aa).

Belongs to the bacterial ribosomal protein bL21 family. In terms of assembly, part of the 50S ribosomal subunit. Contacts protein L20.

This protein binds to 23S rRNA in the presence of protein L20. This is Large ribosomal subunit protein bL21 from Yersinia pseudotuberculosis serotype O:1b (strain IP 31758).